The chain runs to 120 residues: MEDLADVICRALGIPLIDIDDQAIMLDDDVLIYIEKEGDSINLLCPFCALPENINDLIYALSLNYSEKICLATDDEGGNLIARLDLTGINEFEDVYVNTEYYISRVRWLKDEFARRMKGY.

This sequence belongs to the IpgE/SigE chaperone family.

It localises to the cytoplasm. Functionally, molecular chaperone required for IpgD stabilization and secretion. This Shigella flexneri protein is Chaperone protein IpgE (ipgE).